Reading from the N-terminus, the 1190-residue chain is DNA-directed RNA polymerase subunit beta (1190 aa).

It belongs to the RNA polymerase beta chain family. In terms of assembly, the RNAP catalytic core consists of 2 alpha, 1 beta, 1 beta' and 1 omega subunit. When a sigma factor is associated with the core the holoenzyme is formed, which can initiate transcription.

The catalysed reaction is RNA(n) + a ribonucleoside 5'-triphosphate = RNA(n+1) + diphosphate. DNA-dependent RNA polymerase catalyzes the transcription of DNA into RNA using the four ribonucleoside triphosphates as substrates. The polypeptide is DNA-directed RNA polymerase subunit beta (Streptococcus suis (strain 98HAH33)).